The primary structure comprises 383 residues: Lipid-A-disaccharide synthase (383 aa).

Belongs to the LpxB family.

It carries out the reaction a lipid X + a UDP-2-N,3-O-bis[(3R)-3-hydroxyacyl]-alpha-D-glucosamine = a lipid A disaccharide + UDP + H(+). It functions in the pathway bacterial outer membrane biogenesis; LPS lipid A biosynthesis. In terms of biological role, condensation of UDP-2,3-diacylglucosamine and 2,3-diacylglucosamine-1-phosphate to form lipid A disaccharide, a precursor of lipid A, a phosphorylated glycolipid that anchors the lipopolysaccharide to the outer membrane of the cell. The chain is Lipid-A-disaccharide synthase from Aliivibrio fischeri (strain ATCC 700601 / ES114) (Vibrio fischeri).